Here is a 232-residue protein sequence, read N- to C-terminus: Small heat shock protein, chloroplastic (232 aa).

The span at 1–25 (MAQSVSLSTIASPILSQKPGSSVKS) shows a compositional bias: polar residues. Disordered stretches follow at residues 1–35 (MAQSVSLSTIASPILSQKPGSSVKSTPPCMASFPL) and 48–81 (RAQAGGDGDNKDNSVEVHRVNKDDQGTAVERKPR). The N-terminal 46 residues, 1–46 (MAQSVSLSTIASPILSQKPGSSVKSTPPCMASFPLRRQLPRLGLRN), are a transit peptide targeting the chloroplast. Basic and acidic residues predominate over residues 55-78 (GDNKDNSVEVHRVNKDDQGTAVER). Residues 124–232 (IGGGEIRVPW…ERTVIDVQIQ (109 aa)) enclose the sHSP domain.

It belongs to the small heat shock protein (HSP20) family.

The protein localises to the plastid. It is found in the chloroplast. In Pisum sativum (Garden pea), this protein is Small heat shock protein, chloroplastic (HSP21).